Reading from the N-terminus, the 306-residue chain is Beta-lactamase (306 aa).

The tat-type signal signal peptide spans 1–34 (MDRTTARPNRRAVLATGVGAALAATAAAAGPAHA). S82 (acyl-ester intermediate) is an active-site residue. Position 250–252 (250–252 (KTG)) interacts with substrate.

It belongs to the class-A beta-lactamase family. Predicted to be exported by the Tat system. The position of the signal peptide cleavage has not been experimentally proven.

The catalysed reaction is a beta-lactam + H2O = a substituted beta-amino acid. This is Beta-lactamase (blaF) from Streptomyces fradiae (Streptomyces roseoflavus).